A 425-amino-acid polypeptide reads, in one-letter code: MSTPSSSLTTDESPASFILPDLVSHCPFPLRYHPKGDEVAKQTVHWLDSNCPDLTAKERKAMYGLQAGELTGYCYPYTTPERLRVVADFLNYLFHLDNISDGMMTRETAVLADVVMNALWFPEDYRPTKGQAAEELNPGKLARDFWSRCIPDCGPGTQARFKETFGSFFEAVNIQARARDEGVIPDLESYIDVRRDTSGCKPCWVLIEYALGIDLPDFVVEHPVIAALNQGTNDLVTWSNDIFSYNVEQSKGDTHNMIIILMEHHGHTLQSAVDYVGSLCQQTINTFCENKQQLPSWGPEIDDMVAKYVQGLEDWIVGSLHWSFQTRRYFGDEGQEIKQHRLVKLLTVAPPPPPPPPTPPPQSSDADTKKQKVKAQDGKGPVSDEEVWALVRAEQSKGSILESLFGFLTTSLSRIFFGYFFAYSH.

Mg(2+) is bound by residues Asp97, Asp101, Asn240, Ser244, and Glu248. The DDXXD motif signature appears at 97-101 (DNISD). Residues 348 to 382 (VAPPPPPPPPTPPPQSSDADTKKQKVKAQDGKGPV) are disordered. Residues 349-362 (APPPPPPPPTPPPQ) show a composition bias toward pro residues. The segment covering 366–377 (ADTKKQKVKAQD) has biased composition (basic and acidic residues).

This sequence belongs to the terpene synthase family. It depends on Mg(2+) as a cofactor.

It carries out the reaction (2E,6E)-farnesyl diphosphate = alpha-muurolene + diphosphate. The catalysed reaction is (2E,6E)-farnesyl diphosphate = gamma-muurolene + diphosphate. The enzyme catalyses (2E,6E)-farnesyl diphosphate = (+)-(R)-germacrene A + diphosphate. Sesquiterpene synthase that catalyzes the formation of alpha-muurolene, and at lower level (+)-(R)-germacrene A and gamma-muurolene. This Coprinopsis cinerea (strain Okayama-7 / 130 / ATCC MYA-4618 / FGSC 9003) (Inky cap fungus) protein is Alpha-muurolene synthase (COP3).